A 363-amino-acid chain; its full sequence is 3-isopropylmalate dehydrogenase (363 aa).

An NAD(+)-binding site is contributed by 76-89; sequence GPKWDTLPGHLRPE. Substrate-binding residues include Arg-96, Arg-106, Arg-134, and Asp-223. The Mg(2+) site is built by Asp-223, Asp-247, and Asp-251. Position 281-293 (281-293) interacts with NAD(+); it reads GSAPDIAGKGVAN.

This sequence belongs to the isocitrate and isopropylmalate dehydrogenases family. LeuB type 1 subfamily. In terms of assembly, homodimer. Mg(2+) is required as a cofactor. The cofactor is Mn(2+).

The protein localises to the cytoplasm. It carries out the reaction (2R,3S)-3-isopropylmalate + NAD(+) = 4-methyl-2-oxopentanoate + CO2 + NADH. Its pathway is amino-acid biosynthesis; L-leucine biosynthesis; L-leucine from 3-methyl-2-oxobutanoate: step 3/4. Catalyzes the oxidation of 3-carboxy-2-hydroxy-4-methylpentanoate (3-isopropylmalate) to 3-carboxy-4-methyl-2-oxopentanoate. The product decarboxylates to 4-methyl-2 oxopentanoate. The protein is 3-isopropylmalate dehydrogenase of Halalkalibacterium halodurans (strain ATCC BAA-125 / DSM 18197 / FERM 7344 / JCM 9153 / C-125) (Bacillus halodurans).